A 94-amino-acid chain; its full sequence is DNA-binding protein HU (94 aa).

This sequence belongs to the bacterial histone-like protein family. Homodimer.

Functionally, histone-like DNA-binding protein which is capable of wrapping DNA to stabilize it, and thus to prevent its denaturation under extreme environmental conditions. It is essential for heterocyst differentiation. The protein is DNA-binding protein HU (hup) of Nostoc sp. (strain PCC 7120 / SAG 25.82 / UTEX 2576).